A 675-amino-acid chain; its full sequence is Methionine--tRNA ligase (675 aa).

A 'HIGH' region motif is present at residues 15–25 (PYANGSIHLGH). Cys-146, Cys-149, Cys-159, and Cys-162 together coordinate Zn(2+). The 'KMSKS' region motif lies at 332–336 (KMSKS). Lys-335 is a binding site for ATP. Residues 573–675 (DFAKVDMRIA…SGAQPGMQVK (103 aa)) form the tRNA-binding domain.

It belongs to the class-I aminoacyl-tRNA synthetase family. MetG type 1 subfamily. In terms of assembly, homodimer. The cofactor is Zn(2+).

It is found in the cytoplasm. It catalyses the reaction tRNA(Met) + L-methionine + ATP = L-methionyl-tRNA(Met) + AMP + diphosphate. Is required not only for elongation of protein synthesis but also for the initiation of all mRNA translation through initiator tRNA(fMet) aminoacylation. The chain is Methionine--tRNA ligase from Yersinia pseudotuberculosis serotype O:1b (strain IP 31758).